The sequence spans 229 residues: 7-cyano-7-deazaguanine synthase (229 aa).

An ATP-binding site is contributed by 14 to 24 (LSGGQDSTTCL). Positions 192, 200, 203, and 206 each coordinate Zn(2+).

This sequence belongs to the QueC family. Requires Zn(2+) as cofactor.

It catalyses the reaction 7-carboxy-7-deazaguanine + NH4(+) + ATP = 7-cyano-7-deazaguanine + ADP + phosphate + H2O + H(+). The protein operates within purine metabolism; 7-cyano-7-deazaguanine biosynthesis. In terms of biological role, catalyzes the ATP-dependent conversion of 7-carboxy-7-deazaguanine (CDG) to 7-cyano-7-deazaguanine (preQ(0)). In Laribacter hongkongensis (strain HLHK9), this protein is 7-cyano-7-deazaguanine synthase.